The primary structure comprises 127 residues: Large ribosomal subunit protein bL20 (127 aa).

Belongs to the bacterial ribosomal protein bL20 family.

Functionally, binds directly to 23S ribosomal RNA and is necessary for the in vitro assembly process of the 50S ribosomal subunit. It is not involved in the protein synthesizing functions of that subunit. This chain is Large ribosomal subunit protein bL20 (rplT), found in Streptomyces coelicolor (strain ATCC BAA-471 / A3(2) / M145).